The following is a 970-amino-acid chain: Protein CLASP-3 (970 aa).

Disordered stretches follow at residues 314 to 377 (SRLA…QKAR) and 651 to 675 (NGISSGSGGSGNNHPKATPLRETPH). Polar residues predominate over residues 344 to 355 (GSRTRTSSITSN). The stretch at 905 to 943 (ITPCVIKAYQSTSSSVRKTVVYCLVAMVNRVGEQRMAPH) is one HEAT repeat.

This sequence belongs to the CLASP family.

It localises to the cytoplasm. The protein resides in the cytoskeleton. In terms of biological role, microtubule plus-end tracking protein that promotes the stabilization of dynamic microtubules. The protein is Protein CLASP-3 (cls-3) of Caenorhabditis briggsae.